Consider the following 129-residue polypeptide: M-zodatoxin-Lt8h (129 aa).

Positions 1–20 are cleaved as a signal peptide; sequence MKYFVVALALVAAFACIAES. Residues 21 to 60 constitute a propeptide that is removed on maturation; that stretch reads KPAESEHELAEVEEENELADLEDAVWLEDLADLSDLEETR.

Belongs to the cationic peptide 06 (cytoinsectotoxin) family. As to expression, expressed by the venom gland.

It localises to the secreted. Insecticidal, cytolytic and antimicrobial peptide. Has insecticidal activity against the flesh fly S.carnaria. Has antibacterial activity against the Gram-negative bacteria E.coli. Forms voltage-dependent, ion-permeable channels in membranes. At high concentration causes cell membrane lysis. In Lachesana tarabaevi (Spider), this protein is M-zodatoxin-Lt8h (cit 1-11).